A 250-amino-acid chain; its full sequence is Phosphonates import ATP-binding protein PhnC (250 aa).

The ABC transporter domain occupies 2–247; sequence ILFNNVNKVW…KLDAQAMKKI (246 aa). ATP is bound at residue 35–42; it reads GLSGAGKT.

The protein belongs to the ABC transporter superfamily. Phosphonates importer (TC 3.A.1.9.1) family. In terms of assembly, the complex is composed of two ATP-binding proteins (PhnC), two transmembrane proteins (PhnE) and a solute-binding protein (PhnD).

The protein localises to the cell membrane. It carries out the reaction phosphonate(out) + ATP + H2O = phosphonate(in) + ADP + phosphate + H(+). Its function is as follows. Part of the ABC transporter complex PhnCDE involved in phosphonates import. Responsible for energy coupling to the transport system. The chain is Phosphonates import ATP-binding protein PhnC from Mycoplasma capricolum subsp. capricolum (strain California kid / ATCC 27343 / NCTC 10154).